A 115-amino-acid polypeptide reads, in one-letter code: Large ribosomal subunit protein uL18 (115 aa).

This sequence belongs to the universal ribosomal protein uL18 family. In terms of assembly, part of the 50S ribosomal subunit; part of the 5S rRNA/L5/L18/L25 subcomplex. Contacts the 5S and 23S rRNAs.

In terms of biological role, this is one of the proteins that bind and probably mediate the attachment of the 5S RNA into the large ribosomal subunit, where it forms part of the central protuberance. In Rickettsia rickettsii (strain Iowa), this protein is Large ribosomal subunit protein uL18.